The following is a 437-amino-acid chain: Histidinol dehydrogenase (437 aa).

The NAD(+) site is built by Tyr133, Gln191, and Asn214. 3 residues coordinate substrate: Ser240, Gln262, and His265. Zn(2+) contacts are provided by Gln262 and His265. Catalysis depends on proton acceptor residues Glu329 and His330. His330, Asp363, Glu417, and His422 together coordinate substrate. Asp363 is a Zn(2+) binding site. Residue His422 participates in Zn(2+) binding.

This sequence belongs to the histidinol dehydrogenase family. Homodimer. Zn(2+) serves as cofactor.

The catalysed reaction is L-histidinol + 2 NAD(+) + H2O = L-histidine + 2 NADH + 3 H(+). The protein operates within amino-acid biosynthesis; L-histidine biosynthesis; L-histidine from 5-phospho-alpha-D-ribose 1-diphosphate: step 9/9. Catalyzes the sequential NAD-dependent oxidations of L-histidinol to L-histidinaldehyde and then to L-histidine. The chain is Histidinol dehydrogenase from Blochmanniella floridana.